Consider the following 319-residue polypeptide: Large ribosomal subunit protein eL8 (319 aa).

The residue at position 87 (Lys-87) is an N6-acetyllysine. Lys-101 participates in a covalent cross-link: Glycyl lysine isopeptide (Lys-Gly) (interchain with G-Cter in SUMO2). An N6-acetyllysine; alternate modification is found at Lys-150. Lys-150 participates in a covalent cross-link: Glycyl lysine isopeptide (Lys-Gly) (interchain with G-Cter in SUMO2); alternate. Lys-178 is covalently cross-linked (Glycyl lysine isopeptide (Lys-Gly) (interchain with G-Cter in SUMO2)). Lys-270 carries the N6-acetyllysine modification. Lys-298 participates in a covalent cross-link: Glycyl lysine isopeptide (Lys-Gly) (interchain with G-Cter in SUMO2).

It belongs to the eukaryotic ribosomal protein eL8 family. Component of the large ribosomal subunit. Interacts with CRY1. Interacts with DICER1, AGO2, TARBP2, MOV10 and EIF6; they form a large RNA-induced silencing complex (RISC).

It is found in the cytoplasm. In terms of biological role, component of the large ribosomal subunit. The ribosome is a large ribonucleoprotein complex responsible for the synthesis of proteins in the cell. This is Large ribosomal subunit protein eL8 (RPL7A) from Oryctolagus cuniculus (Rabbit).